Here is a 92-residue protein sequence, read N- to C-terminus: Protein S100-A12 (92 aa).

EF-hand domains follow at residues 13-48 (NIFHQYSVRKGHFDTLSKGELKQLLTKELANTIKNI) and 49-84 (KDKAVIDEIFQGLDANQDEQVDFQEFISLVAIALKA). Cu cation is bound at residue His-16. His-16 lines the Zn(2+) pocket. Ca(2+)-binding residues include Ser-19, Lys-22, and His-24. Position 26 (Asp-26) interacts with Cu cation. Asp-26 serves as a coordination point for Zn(2+). Ca(2+) contacts are provided by Thr-27 and Glu-32. The segment at 38–53 (TKELANTIKNIKDKAV) is hinge domain. Residues Asp-62, Asn-64, Asp-66, Gln-68, and Glu-73 each contribute to the Ca(2+) site. Positions 86 and 90 each coordinate Cu cation. 2 residues coordinate Zn(2+): His-86 and His-90.

This sequence belongs to the S-100 family. As to quaternary structure, homodimer. Homooligomer (tetramer or hexamer) in the presence of calcium, zinc and copper ions. Interacts with AGER and both calcium and zinc are essential for the interaction. Interacts with CACYBP in a calcium-dependent manner. As to expression, predominantly expressed by neutrophils, monocytes and activated macrophages. Expressed by eosinophils and macrophages in asthmatic airways in regions where mast cells accumulate. Found in high concentrations in the serum of patients suffering from various inflammatory disorders, such as rheumatoid arthritis, psoriatic arthritis, Crohn's disease, ulcerative colitis, and Kawasaki disease.

Its subcellular location is the secreted. The protein resides in the cytoplasm. It localises to the cytoskeleton. It is found in the cell membrane. Functionally, S100A12 is a calcium-, zinc- and copper-binding protein which plays a prominent role in the regulation of inflammatory processes and immune response. Its pro-inflammatory activity involves recruitment of leukocytes, promotion of cytokine and chemokine production, and regulation of leukocyte adhesion and migration. Acts as an alarmin or a danger associated molecular pattern (DAMP) molecule and stimulates innate immune cells via binding to receptor for advanced glycation endproducts (AGER). Binding to AGER activates the MAP-kinase and NF-kappa-B signaling pathways leading to production of pro-inflammatory cytokines and up-regulation of cell adhesion molecules ICAM1 and VCAM1. Acts as a monocyte and mast cell chemoattractant. Can stimulate mast cell degranulation and activation which generates chemokines, histamine and cytokines inducing further leukocyte recruitment to the sites of inflammation. Can inhibit the activity of matrix metalloproteinases; MMP2, MMP3 and MMP9 by chelating Zn(2+) from their active sites. Possesses filariacidal and filariastatic activity. Calcitermin possesses antifungal activity against C.albicans and is also active against E.coli and P.aeruginosa but not L.monocytogenes and S.aureus. The protein is Protein S100-A12 (S100A12) of Homo sapiens (Human).